The chain runs to 105 residues: Large ribosomal subunit protein eL42 (105 aa).

The disordered stretch occupies residues 23-52 (KVTQYKKGKESRLAQGRRRYDSKQKGFGGQ). Residues 29–46 (KGKESRLAQGRRRYDSKQ) show a composition bias toward basic and acidic residues.

This sequence belongs to the eukaryotic ribosomal protein eL42 family.

The sequence is that of Large ribosomal subunit protein eL42 (rpl-44) from Brugia malayi (Filarial nematode worm).